The following is a 314-amino-acid chain: MESTKKQVSLELLPWLVVHTDGTVERLAGTEVCPPGLDPITGVFSKDIIIEPKTGLSARIYRPFSIQPGQKIPLMLYFHGGAFLISSTSFPSYHTSLNKIVNQANVIAVSVNYRLAPEHPLPTAYEDSWTALKNIQAINEPWINDYADLDSLFLVGDSAGANISHHLAFRAKQSDQTLKIKGIGMIHPYFWGTQPIGAEIKDEARKQMVDGWWEFVCPSEKGSDDPWINPFADGSPDLGGLGCERVMITVAEKDILNERGKMYYERLVKSEWKGKVEIMETKEKDHVFHIFEPDCDEAMEMVRCLALFINQVEA.

An Involved in the stabilization of the negatively charged intermediate by the formation of the oxyanion hole motif is present at residues 79–81 (HGG). Active-site residues include S158, D254, and H286.

The protein belongs to the 'GDXG' lipolytic enzyme family. As to expression, expressed in roots and flowers.

It carries out the reaction a carboxylic ester + H2O = an alcohol + a carboxylate + H(+). Functionally, carboxylesterase acting on esters with varying acyl chain length. This is Probable carboxylesterase 2 (CXE2) from Arabidopsis thaliana (Mouse-ear cress).